A 210-amino-acid chain; its full sequence is Scoloptoxin SSD552 (210 aa).

The signal sequence occupies residues M1 to G23.

Post-translationally, contains 3 disulfide bonds. As to expression, expressed by the venom gland.

Its subcellular location is the secreted. This chain is Scoloptoxin SSD552, found in Scolopendra dehaani (Thai centipede).